A 427-amino-acid polypeptide reads, in one-letter code: Serine hydroxymethyltransferase (427 aa).

(6S)-5,6,7,8-tetrahydrofolate contacts are provided by residues L122 and 126-128 (GHL). N6-(pyridoxal phosphate)lysine is present on K231. (6S)-5,6,7,8-tetrahydrofolate is bound by residues E247 and 355-357 (SPF).

The protein belongs to the SHMT family. Homodimer. Pyridoxal 5'-phosphate is required as a cofactor.

Its subcellular location is the cytoplasm. It catalyses the reaction (6R)-5,10-methylene-5,6,7,8-tetrahydrofolate + glycine + H2O = (6S)-5,6,7,8-tetrahydrofolate + L-serine. The protein operates within one-carbon metabolism; tetrahydrofolate interconversion. It functions in the pathway amino-acid biosynthesis; glycine biosynthesis; glycine from L-serine: step 1/1. Functionally, catalyzes the reversible interconversion of serine and glycine with tetrahydrofolate (THF) serving as the one-carbon carrier. This reaction serves as the major source of one-carbon groups required for the biosynthesis of purines, thymidylate, methionine, and other important biomolecules. Also exhibits THF-independent aldolase activity toward beta-hydroxyamino acids, producing glycine and aldehydes, via a retro-aldol mechanism. This is Serine hydroxymethyltransferase from Microcystis aeruginosa (strain NIES-843 / IAM M-2473).